Reading from the N-terminus, the 145-residue chain is Nucleoside diphosphate kinase (145 aa).

ATP-binding residues include Lys11, Phe59, Arg87, Thr93, Arg104, and Asn114. His117 serves as the catalytic Pros-phosphohistidine intermediate.

Belongs to the NDK family. As to quaternary structure, homotetramer. Mg(2+) is required as a cofactor.

The protein resides in the cytoplasm. It catalyses the reaction a 2'-deoxyribonucleoside 5'-diphosphate + ATP = a 2'-deoxyribonucleoside 5'-triphosphate + ADP. The enzyme catalyses a ribonucleoside 5'-diphosphate + ATP = a ribonucleoside 5'-triphosphate + ADP. Major role in the synthesis of nucleoside triphosphates other than ATP. The ATP gamma phosphate is transferred to the NDP beta phosphate via a ping-pong mechanism, using a phosphorylated active-site intermediate. This Myxococcus xanthus protein is Nucleoside diphosphate kinase.